Consider the following 129-residue polypeptide: Small ribosomal subunit protein uS9 (129 aa).

The protein belongs to the universal ribosomal protein uS9 family.

In Helicobacter hepaticus (strain ATCC 51449 / 3B1), this protein is Small ribosomal subunit protein uS9.